The sequence spans 88 residues: Large ribosomal subunit protein bL31 (88 aa).

The segment at 67 to 88 (MGSVDNATSEKKSATDETSKES) is disordered. The span at 74 to 88 (TSEKKSATDETSKES) shows a compositional bias: basic and acidic residues.

This sequence belongs to the bacterial ribosomal protein bL31 family. Type A subfamily. As to quaternary structure, part of the 50S ribosomal subunit.

Functionally, binds the 23S rRNA. This is Large ribosomal subunit protein bL31 from Synechococcus sp. (strain CC9311).